Here is a 319-residue protein sequence, read N- to C-terminus: uncharacterized protein (319 aa).

Residues 270–290 (AAALWWIPAWLAMIVEVAVLG) traverse the membrane as a helical segment.

The protein localises to the membrane. This is an uncharacterized protein from Mycobacterium tuberculosis (strain CDC 1551 / Oshkosh).